Consider the following 105-residue polypeptide: Large ribosomal subunit protein eL36 (105 aa).

The segment at 1–36 is disordered; the sequence is MAQERSGIAVGLNKGHKTTPLNTPKTRISRSKGKAS. Basic residues predominate over residues 27-36; sequence RISRSKGKAS.

It belongs to the eukaryotic ribosomal protein eL36 family. As to quaternary structure, component of the large ribosomal subunit (LSU).

The protein resides in the cytoplasm. Its function is as follows. Component of the ribosome, a large ribonucleoprotein complex responsible for the synthesis of proteins in the cell. The small ribosomal subunit (SSU) binds messenger RNAs (mRNAs) and translates the encoded message by selecting cognate aminoacyl-transfer RNA (tRNA) molecules. The large subunit (LSU) contains the ribosomal catalytic site termed the peptidyl transferase center (PTC), which catalyzes the formation of peptide bonds, thereby polymerizing the amino acids delivered by tRNAs into a polypeptide chain. The nascent polypeptides leave the ribosome through a tunnel in the LSU and interact with protein factors that function in enzymatic processing, targeting, and the membrane insertion of nascent chains at the exit of the ribosomal tunnel. In Emericella nidulans (strain FGSC A4 / ATCC 38163 / CBS 112.46 / NRRL 194 / M139) (Aspergillus nidulans), this protein is Large ribosomal subunit protein eL36.